The sequence spans 511 residues: ATP synthase subunit alpha 1 (511 aa).

Residue 170-177 participates in ATP binding; that stretch reads GDRQTGKT.

This sequence belongs to the ATPase alpha/beta chains family. As to quaternary structure, F-type ATPases have 2 components, CF(1) - the catalytic core - and CF(0) - the membrane proton channel. CF(1) has five subunits: alpha(3), beta(3), gamma(1), delta(1), epsilon(1). CF(0) has three main subunits: a(1), b(2) and c(9-12). The alpha and beta chains form an alternating ring which encloses part of the gamma chain. CF(1) is attached to CF(0) by a central stalk formed by the gamma and epsilon chains, while a peripheral stalk is formed by the delta and b chains.

It localises to the cell inner membrane. The catalysed reaction is ATP + H2O + 4 H(+)(in) = ADP + phosphate + 5 H(+)(out). Functionally, produces ATP from ADP in the presence of a proton gradient across the membrane. The alpha chain is a regulatory subunit. The protein is ATP synthase subunit alpha 1 of Gluconobacter oxydans (strain 621H) (Gluconobacter suboxydans).